The primary structure comprises 373 residues: Centrosomal protein of 41 kDa (373 aa).

Residues Q89 to N127 form a disordered region. Phosphoserine occurs at positions 96 and 99. Residues A107–N127 show a composition bias toward polar residues. T109 is modified (phosphothreonine). Phosphoserine occurs at positions 114 and 121. Residues P169–I266 form the Rhodanese domain. Disordered stretches follow at residues Q275–W300 and E315–K373. Omega-N-methylarginine is present on R343.

It belongs to the CEP41 family. Found in a complex with TTLL6.

The protein resides in the cytoplasm. It localises to the cytoskeleton. It is found in the microtubule organizing center. The protein localises to the centrosome. Its subcellular location is the cell projection. The protein resides in the cilium. It localises to the cilium basal body. Required during ciliogenesis for tubulin glutamylation in cilium. Probably acts by participating in the transport of TTLL6, a tubulin polyglutamylase, between the basal body and the cilium. This Bos taurus (Bovine) protein is Centrosomal protein of 41 kDa (CEP41).